Consider the following 120-residue polypeptide: Large ribosomal subunit protein eL8 (120 aa).

Belongs to the eukaryotic ribosomal protein eL8 family. Part of the 50S ribosomal subunit. Probably part of the RNase P complex.

The protein resides in the cytoplasm. Its function is as follows. Multifunctional RNA-binding protein that recognizes the K-turn motif in ribosomal RNA, the RNA component of RNase P, box H/ACA, box C/D and box C'/D' sRNAs. The sequence is that of Large ribosomal subunit protein eL8 from Methanosarcina mazei (strain ATCC BAA-159 / DSM 3647 / Goe1 / Go1 / JCM 11833 / OCM 88) (Methanosarcina frisia).